The sequence spans 305 residues: Insulin-like growth factor-binding protein 2 (305 aa).

Positions 1-34 (MLPRLGGPALPLLLPSLLLLLLLGAGGCGPGVRA) are cleaved as a signal peptide. The 83-residue stretch at 36–118 (VLFRCPPCTP…VTGAGTCEKR (83 aa)) folds into the IGFBP N-terminal domain. Disulfide bonds link cysteine 40–cysteine 68, cysteine 43–cysteine 70, cysteine 51–cysteine 71, cysteine 59–cysteine 74, cysteine 82–cysteine 95, cysteine 89–cysteine 115, cysteine 207–cysteine 241, cysteine 252–cysteine 263, and cysteine 265–cysteine 286. A Thyroglobulin type-1 domain is found at 204–286 (RTPCQQELDQ…APTIRGDPEC (83 aa)). Residues 281–283 (RGD) carry the Cell attachment site motif.

As to quaternary structure, interacts with IGF1. Interacts with IGF2. Interacts (via RGD motif) with integrin alpha5/ITGA5; this interaction induces cell migration, adhesion or apoptosis according to the context. Interacts with PTPRB; this interaction leads to PTPRB dimerization and inactivation. Post-translationally, cleaved by MMP9 leading to release of free IGF2 from IGFBP2-IGF2 complex, which contributes to enhance the motility and the growth of astrocytes. O-glycosylated. In terms of tissue distribution, highly expressed in adult liver, but also in kidney, lung, brain, spleen, testis and ovary.

Its subcellular location is the secreted. Its function is as follows. Multifunctional protein that plays a critical role in regulating the availability of IGFs such as IGF1 and IGF2 to their receptors and thereby regulates IGF-mediated cellular processes including proliferation, differentiation, and apoptosis in a cell-type specific manner. Functions coordinately with receptor protein tyrosine phosphatase beta/PTPRB and the IGF1 receptor to regulate IGF1-mediated signaling by stimulating the phosphorylation of PTEN leading to its inactivation and AKT1 activation. Plays a positive role in cell migration via interaction with integrin alpha5/ITGA5 through an RGD motif. Additionally, interaction with ITGA5/ITGB1 enhances the adhesion of endothelial progenitor cells to endothelial cells. Upon mitochondrial damage, facilitates apoptosis with ITGA5 of podocytes, and then activates the phosphorylation of focal adhesion kinase (FAK)-mediated mitochondrial injury. This Mus musculus (Mouse) protein is Insulin-like growth factor-binding protein 2 (Igfbp2).